The chain runs to 98 residues: Major carboxysome shell protein CsoS1A (98 aa).

One can recognise a BMC domain in the interval 8–93 (ALGMIETRGL…VHSEVENILP (86 aa)).

The protein belongs to the bacterial microcompartments protein family. CsoS1 subfamily. As to quaternary structure, homohexamer with a small central pore; the concave side is mostly positive electrostatic potential, whereas the convex side is mostly negative electrostatic potential. Forms a CsoS2-CsoS1-RuBisCO complex. Interacts with the N-terminus (residues 1-136) of RuBisCO (CbbL).

Its subcellular location is the carboxysome. In terms of biological role, the major shell protein of the carboxysome, a polyhedral inclusion where RuBisCO (ribulose bisphosphate carboxylase, ccbL-ccbS) is sequestered. Assembles into hexamers which make sheets that form the facets of the polyhedral carboxysome. The shell probably limits the diffusion of CO(2) into and out of the carboxysome. Molecular modeling shows the central pore of this protein is selectively permeable to anions such as HCO(3) rather than CO(2) or O(2). There are estimated to be 2970 CsoS1A/CsoS1C proteins per carboxysome (the proteins differ by only 1 residue). Its function is as follows. Unlike beta-carboxysomes, alpha-carboxysomes (Cb) can form without cargo protein. CsoS2 is essential for Cb formation and is also capable of targeting foreign proteins to the Cb. The Cb shell assembles with the aid of CsoS2; CsoS1A, CsoS1B and CsoS1C form the majority of the shell while CsoS4A and CsoS4B form vertices. CsoS1D forms pseudohexamers that probably control metabolite flux into and out of the shell. This chain is Major carboxysome shell protein CsoS1A, found in Halothiobacillus neapolitanus (strain ATCC 23641 / c2) (Thiobacillus neapolitanus).